The primary structure comprises 372 residues: B2 bradykinin receptor (372 aa).

Residues 1 to 34 (MFNITSQVSALNATLAQGNSCLDAEWWSWLNTIQ) are Extracellular-facing. Asn-3 and Asn-12 each carry an N-linked (GlcNAc...) asparagine glycan. Residues 35 to 58 (APFLWVLFVLAVLENIFVLSVFFL) traverse the membrane as a helical segment. Topologically, residues 59–67 (HKSSCTVAE) are cytoplasmic. Residues 68–92 (IYLGNLAVADLILAFGLPFWAITIA) form a helical membrane-spanning segment. The Extracellular segment spans residues 93–105 (NNFDWLFGEVLCR). Cys-104 and Cys-185 are oxidised to a cystine. The helical transmembrane segment at 106-127 (MVNTMIQMNMYSSICFLMLVSI) threads the bilayer. The Cytoplasmic segment spans residues 128 to 149 (DRYLALVKTMSMGRMRGVRWAK). Position 130 is a phosphotyrosine (Tyr-130). Residues 150-172 (LYSLVIWGCALLLSSPMLVFRTM) form a helical membrane-spanning segment. The Extracellular portion of the chain corresponds to 173-195 (KDYRDEGHNVTACLIIYPSLTWQ). Asn-181 is a glycosylation site (N-linked (GlcNAc...) asparagine). A helical membrane pass occupies residues 196–222 (VFTNVLLNLVGFLLPLSIITFCTVQIM). The Cytoplasmic segment spans residues 223-241 (QVLRNNEMQKFKEIQTERR). The chain crosses the membrane as a helical span at residues 242 to 266 (ATVLVLAVLLLFVVCWLPFQIGTFL). Topologically, residues 267–284 (DTLRLLGFLPGCWEHVID) are extracellular. The helical transmembrane segment at 285–308 (LITQISSYLAYSNSCLNPLVYVIV) threads the bilayer. Topologically, residues 309 to 364 (GKRFRKKSREVYHGLCRSGGCVSEPAQSENSMGTLRTSISVDRQIHKLQDWARSSS) are cytoplasmic. Position 320 is a phosphotyrosine (Tyr-320). Cys-324 carries S-palmitoyl cysteine lipidation. Residue Ser-339 is modified to Phosphoserine. At Thr-342 the chain carries Phosphothreonine. 2 positions are modified to phosphoserine; by GRK6: Ser-346 and Ser-348.

It belongs to the G-protein coupled receptor 1 family. Bradykinin receptor subfamily. BDKRB2 sub-subfamily. As to quaternary structure, forms a complex with PECAM1 and GNAQ. Interacts with PECAM1.

It localises to the cell membrane. In terms of biological role, receptor for bradykinin. It is associated with G proteins that activate a phosphatidylinositol-calcium second messenger system. The polypeptide is B2 bradykinin receptor (BDKRB2) (Cavia porcellus (Guinea pig)).